The primary structure comprises 630 residues: Polyphenol oxidase A, chloroplastic (630 aa).

A disordered region spans residues 1–25 (MASLCSNSSSTSLKTPFTSSTTCLS). The N-terminal 87 residues, 1–87 (MASLCSNSSS…ANAIPLAASA (87 aa)), are a transit peptide targeting the chloroplast. 2 disulfide bridges follow: C98–C114 and C113–C181. Positions 180, 198, 207, 328, 332, and 370 each coordinate Cu cation. Residues 184-198 (CNGGYSIDGKVLQVH) constitute a cross-link (2'-(S-cysteinyl)-histidine (Cys-His)).

The protein belongs to the tyrosinase family. The cofactor is Cu(2+).

The protein localises to the plastid. The protein resides in the chloroplast thylakoid lumen. It catalyses the reaction 2 catechol + O2 = 2 1,2-benzoquinone + 2 H2O. In terms of biological role, catalyzes the oxidation of mono- and o-diphenols to o-diquinones. The sequence is that of Polyphenol oxidase A, chloroplastic from Solanum lycopersicum (Tomato).